The primary structure comprises 429 residues: Adenylosuccinate synthetase (429 aa).

GTP contacts are provided by residues 12–18 and 40–42; these read GDEGKGK and GHT. Asp13 (proton acceptor) is an active-site residue. The Mg(2+) site is built by Asp13 and Gly40. IMP is bound by residues 13–16, 38–41, Thr128, Arg142, Gln223, Thr238, and Arg302; these read DEGK and NAGH. His41 acts as the Proton donor in catalysis. Position 298–304 (298–304) interacts with substrate; the sequence is VNTGRPR. GTP-binding positions include Arg304, 330–332, and 412–414; these read KLD and GVG.

It belongs to the adenylosuccinate synthetase family. As to quaternary structure, homodimer. Mg(2+) serves as cofactor.

The protein resides in the cytoplasm. The enzyme catalyses IMP + L-aspartate + GTP = N(6)-(1,2-dicarboxyethyl)-AMP + GDP + phosphate + 2 H(+). It functions in the pathway purine metabolism; AMP biosynthesis via de novo pathway; AMP from IMP: step 1/2. Functionally, plays an important role in the de novo pathway of purine nucleotide biosynthesis. Catalyzes the first committed step in the biosynthesis of AMP from IMP. This Kocuria rhizophila (strain ATCC 9341 / DSM 348 / NBRC 103217 / DC2201) protein is Adenylosuccinate synthetase.